The primary structure comprises 748 residues: Meprin A subunit alpha (748 aa).

A signal peptide spans 1-20; it reads MLWTLPVCLLSLSFSAHIAA. Residues 21-66 constitute a propeptide that is removed on maturation; it reads VSIQHLSTGHDHDDVDVGEQQKDISEINSAAGLNLFQGDILLPRTR. A Peptidase M12A domain is found at 67–261; it reads NALRDPSSRW…TRLNRMYNCT (195 aa). Topologically, residues 67–719 are extracellular; sequence NALRDPSSRW…RCQAMHVHGS (653 aa). 3 cysteine pairs are disulfide-bonded: C108–C260, C129–C148, and C270–C432. An N-linked (GlcNAc...) asparagine glycan is attached at N141. H156 serves as a coordination point for Zn(2+). E157 is an active-site residue. Zn(2+) is bound by residues H160 and H166. Residues N223, N259, N319, N441, and N542 are each glycosylated (N-linked (GlcNAc...) asparagine). The MAM domain maps to 265 to 434; the sequence is TLLDHCAFEK…ITLTETPCPT (170 aa). The 162-residue stretch at 435–596 folds into the MATH domain; it reads GVWTIRNISQ…DDTLIIFVDF (162 aa). A disordered region spans residues 641–668; the sequence is LPRRLDQRQPSRPKRSVENTGPMEDHNW. Residues 672 to 712 form the EGF-like domain; it reads FRDPCDPNPCQNEGTCVNVKGMASCRCVSGHAFFYTGERCQ. 3 disulfide bridges follow: C676-C687, C681-C696, and C698-C711. The helical transmembrane segment at 720 to 739 threads the bilayer; it reads LLGLLIGCITALIFLTFITF. The Cytoplasmic portion of the chain corresponds to 740–748; the sequence is SNTYQKLRQ.

Homotetramer consisting of disulfide-linked alpha subunits, homooligomer consisting of disulfide-linked alpha subunit homodimers, or heterotetramer of two alpha and two beta subunits formed by non-covalent association of two disulfide-linked heterodimers. Interacts with MBL2 through its carbohydrate moiety. This interaction may inhibit its catalytic activity. Zn(2+) is required as a cofactor. Post-translationally, N-glycosylated; contains GlcNAc, galactose, mannose and a small amount of fucose. As to expression, colocalized with E-24.11 in proximal tubules of juxtamedullary nephrons.

Its subcellular location is the membrane. The catalysed reaction is Hydrolysis of protein and peptide substrates preferentially on carboxyl side of hydrophobic residues.. With respect to regulation, inhibited by actinonin. The sequence is that of Meprin A subunit alpha (Mep1a) from Rattus norvegicus (Rat).